The sequence spans 455 residues: MSQRQQFQFLLSFLILIFLKFIIQIRCDESNGVIIIKNIEDGGSGSGTVSYCQMEQIRDEYITIKTNYGIVSSIGSTTASGSVDGKKEFSLIFNQLIPSDIGYEYFFLRWGTNKQTIATLTDPFLNPYRFNIVHLNRTDLYSIQPTTNNSYLVENLNSISKQVTFNSLIFVNRKSPFFFIFSNFNKVCDNKNNFNMEILYPNNNNNDDFNNSNNNNVDNSNFCSSIQYGNQLVTIKSMSSGNYISSEGSTNAWDIGNKFIKTIPLSSELTDSNYFKIITFENNKIGFLDKFKSFWSWNNTNVEVSSTMLKNQKFNLEPVLNNPSCSKNCYYIKTGNSGYIKEYITKNSVNGNLLNSGSSDDKTMFLIKLLPICSKDINNYGTSSSTTSTTSSSSSSSSSTTTATTMATTTTSKITTTSNINDSFGDDENLINSSSVIKFSTPIIMIIIILINIKF.

The first 27 residues, 1–27 (MSQRQQFQFLLSFLILIFLKFIIQIRC), serve as a signal peptide directing secretion. Topologically, residues 29 to 434 (ESNGVIIIKN…GDDENLINSS (406 aa)) are extracellular. N-linked (GlcNAc...) asparagine glycans are attached at residues Asn-136, Asn-148, Asn-210, and Asn-298. Residues 383–402 (SSSTTSTTSSSSSSSSSTTT) are disordered. 2 N-linked (GlcNAc...) asparagine glycosylation sites follow: Asn-421 and Asn-432. Residues 435–455 (SVIKFSTPIIMIIIILINIKF) traverse the membrane as a helical segment.

Its subcellular location is the membrane. This is an uncharacterized protein from Dictyostelium discoideum (Social amoeba).